A 65-amino-acid chain; its full sequence is Oxiana weak toxin (65 aa).

5 cysteine pairs are disulfide-bonded: Cys-3–Cys-24, Cys-6–Cys-11, Cys-17–Cys-42, Cys-46–Cys-57, and Cys-58–Cys-63.

This sequence belongs to the three-finger toxin family. Ancestral subfamily. Orphan group II sub-subfamily. As to expression, expressed by the venom gland.

The protein resides in the secreted. In terms of biological role, binds to muscle and neuronal nicotinic acetylcholine receptors (nAChR). It binds to extracellular domain of rat alpha-7/CHRNA7 nAChR (IC(50)=2.2 uM) and to Torpedo californica membranes (IC(50)=30 uM). This chain is Oxiana weak toxin, found in Naja oxiana (Central Asian cobra).